The chain runs to 183 residues: Mid1-interacting protein 1 (183 aa).

An N-acetylmethionine modification is found at Met1. Phosphoserine occurs at positions 75 and 79.

The protein belongs to the SPOT14 family. In terms of assembly, homodimer in the absence of THRSP. Heterodimer with THRSP. The homodimer interacts with ACACA and ACACB. Promotes polymerization of Acetyl-CoA carboxylase to form complexes that contain MID1IP1 and ACACA and/or ACACB. Interaction with THRSP interferes with ACACA binding.

The protein resides in the nucleus. Its subcellular location is the cytoplasm. It is found in the cytoskeleton. In terms of biological role, plays a role in the regulation of lipogenesis in liver. Up-regulates ACACA enzyme activity. Required for efficient lipid biosynthesis, including triacylglycerol, diacylglycerol and phospholipid. Involved in stabilization of microtubules. This Homo sapiens (Human) protein is Mid1-interacting protein 1 (MID1IP1).